The chain runs to 206 residues: Na(+)-translocating NADH-quinone reductase subunit E (206 aa).

The next 6 helical transmembrane spans lie at 12–32, 36–56, 85–105, 118–138, 148–168, and 184–204; these read AVFV…FLAV, ISSA…TVPV, FLGL…LEMF, GVFL…LFMV, VIYG…LAGI, and LGIT…FSGI.

It belongs to the NqrDE/RnfAE family. Composed of six subunits; NqrA, NqrB, NqrC, NqrD, NqrE and NqrF.

Its subcellular location is the cell inner membrane. It catalyses the reaction a ubiquinone + n Na(+)(in) + NADH + H(+) = a ubiquinol + n Na(+)(out) + NAD(+). Functionally, NQR complex catalyzes the reduction of ubiquinone-1 to ubiquinol by two successive reactions, coupled with the transport of Na(+) ions from the cytoplasm to the periplasm. NqrA to NqrE are probably involved in the second step, the conversion of ubisemiquinone to ubiquinol. This chain is Na(+)-translocating NADH-quinone reductase subunit E, found in Chromohalobacter salexigens (strain ATCC BAA-138 / DSM 3043 / CIP 106854 / NCIMB 13768 / 1H11).